A 105-amino-acid chain; its full sequence is MIGNERHGLVGVIGADLIRNAKIPLILLVAVLISAVLVVTTAHRTRLLTAEREQLVLERDALDIEWRNLILEENALGDHSRVESIAIEKLKMQHVDPSQENIVIK.

Residues 1 to 22 (MIGNERHGLVGVIGADLIRNAK) lie on the Cytoplasmic side of the membrane. Residues 23 to 43 (IPLILLVAVLISAVLVVTTAH) traverse the membrane as a helical segment. Residues 44–105 (RTRLLTAERE…DPSQENIVIK (62 aa)) lie on the Periplasmic side of the membrane.

It belongs to the FtsL family. In terms of assembly, part of a complex composed of FtsB, FtsL and FtsQ.

It is found in the cell inner membrane. In terms of biological role, essential cell division protein. May link together the upstream cell division proteins, which are predominantly cytoplasmic, with the downstream cell division proteins, which are predominantly periplasmic. The protein is Cell division protein FtsL of Yersinia pestis.